The chain runs to 652 residues: tRNA 5-methylaminomethyl-2-thiouridine biosynthesis bifunctional protein MnmC (652 aa).

The tract at residues 1–235 (MPDRLVPATL…EPALRVGEYA (235 aa)) is tRNA (mnm(5)s(2)U34)-methyltransferase. The FAD-dependent cmnm(5)s(2)U34 oxidoreductase stretch occupies residues 259–652 (IGAGLAGCAV…IRALRGRQIG (394 aa)).

This sequence in the N-terminal section; belongs to the methyltransferase superfamily. tRNA (mnm(5)s(2)U34)-methyltransferase family. The protein in the C-terminal section; belongs to the DAO family. Requires FAD as cofactor.

The protein localises to the cytoplasm. The enzyme catalyses 5-aminomethyl-2-thiouridine(34) in tRNA + S-adenosyl-L-methionine = 5-methylaminomethyl-2-thiouridine(34) in tRNA + S-adenosyl-L-homocysteine + H(+). Functionally, catalyzes the last two steps in the biosynthesis of 5-methylaminomethyl-2-thiouridine (mnm(5)s(2)U) at the wobble position (U34) in tRNA. Catalyzes the FAD-dependent demodification of cmnm(5)s(2)U34 to nm(5)s(2)U34, followed by the transfer of a methyl group from S-adenosyl-L-methionine to nm(5)s(2)U34, to form mnm(5)s(2)U34. The polypeptide is tRNA 5-methylaminomethyl-2-thiouridine biosynthesis bifunctional protein MnmC (Burkholderia ambifaria (strain ATCC BAA-244 / DSM 16087 / CCUG 44356 / LMG 19182 / AMMD) (Burkholderia cepacia (strain AMMD))).